A 389-amino-acid chain; its full sequence is Acetate kinase (389 aa).

Asn-9 contributes to the Mg(2+) binding site. Lys-16 lines the ATP pocket. Arg-77 is a substrate binding site. Asp-134 (proton donor/acceptor) is an active-site residue. Residues 194 to 198 (HLGNG), 268 to 270 (DFR), and 316 to 320 (GVGEN) contribute to the ATP site. Glu-370 is a binding site for Mg(2+).

The protein belongs to the acetokinase family. Homodimer. Mg(2+) serves as cofactor. It depends on Mn(2+) as a cofactor.

It is found in the cytoplasm. The enzyme catalyses acetate + ATP = acetyl phosphate + ADP. Its pathway is metabolic intermediate biosynthesis; acetyl-CoA biosynthesis; acetyl-CoA from acetate: step 1/2. Its function is as follows. Catalyzes the formation of acetyl phosphate from acetate and ATP. Can also catalyze the reverse reaction. This Mycolicibacterium vanbaalenii (strain DSM 7251 / JCM 13017 / BCRC 16820 / KCTC 9966 / NRRL B-24157 / PYR-1) (Mycobacterium vanbaalenii) protein is Acetate kinase.